The sequence spans 452 residues: Probable cytosolic iron-sulfur protein assembly protein 1 (452 aa).

Positions 1 to 12 (MPPPTTPTPNPS) are enriched in pro residues. A disordered region spans residues 1–24 (MPPPTTPTPNPSIPQKATLTPLPP). WD repeat units follow at residues 70–121 (GHAR…DAAA), 161–200 (GHEN…QGGD), 213–267 (EHDG…EWVC), 273–319 (GHGG…FGGV), 340–379 (VHTR…EDVA), and 411–452 (YEVN…VRIS).

It belongs to the WD repeat CIA1 family.

Its function is as follows. Essential component of the cytosolic iron-sulfur (Fe/S) protein assembly machinery. Required for the maturation of extramitochondrial Fe/S proteins. This Chaetomium globosum (strain ATCC 6205 / CBS 148.51 / DSM 1962 / NBRC 6347 / NRRL 1970) (Soil fungus) protein is Probable cytosolic iron-sulfur protein assembly protein 1.